The primary structure comprises 416 residues: UDP-N-acetylglucosamine 1-carboxyvinyltransferase (416 aa).

Residue 22–23 (KN) participates in phosphoenolpyruvate binding. Residue R92 coordinates UDP-N-acetyl-alpha-D-glucosamine. C116 serves as the catalytic Proton donor. 2-(S-cysteinyl)pyruvic acid O-phosphothioketal is present on C116. Residues 121-125 (RPVDQ), D304, and I326 contribute to the UDP-N-acetyl-alpha-D-glucosamine site.

It belongs to the EPSP synthase family. MurA subfamily.

It localises to the cytoplasm. It carries out the reaction phosphoenolpyruvate + UDP-N-acetyl-alpha-D-glucosamine = UDP-N-acetyl-3-O-(1-carboxyvinyl)-alpha-D-glucosamine + phosphate. The protein operates within cell wall biogenesis; peptidoglycan biosynthesis. In terms of biological role, cell wall formation. Adds enolpyruvyl to UDP-N-acetylglucosamine. In Cupriavidus pinatubonensis (strain JMP 134 / LMG 1197) (Cupriavidus necator (strain JMP 134)), this protein is UDP-N-acetylglucosamine 1-carboxyvinyltransferase.